A 275-amino-acid chain; its full sequence is 2,3,4,5-tetrahydropyridine-2,6-dicarboxylate N-succinyltransferase (275 aa).

Substrate-binding residues include arginine 104 and aspartate 141.

Belongs to the transferase hexapeptide repeat family. In terms of assembly, homotrimer.

It is found in the cytoplasm. The enzyme catalyses (S)-2,3,4,5-tetrahydrodipicolinate + succinyl-CoA + H2O = (S)-2-succinylamino-6-oxoheptanedioate + CoA. Its pathway is amino-acid biosynthesis; L-lysine biosynthesis via DAP pathway; LL-2,6-diaminopimelate from (S)-tetrahydrodipicolinate (succinylase route): step 1/3. The protein is 2,3,4,5-tetrahydropyridine-2,6-dicarboxylate N-succinyltransferase of Haemophilus influenzae (strain PittEE).